Consider the following 124-residue polypeptide: Late histone H2B.2.2 (124 aa).

A disordered region spans residues 1-32 (MPAKQTSGKGAKKAGKAKGRPSGASKTRRRKR). Over residues 10-19 (GAKKAGKAKG) the composition is skewed to basic residues. S111 is a glycosylation site (O-linked (GlcNAc) serine). A Glycyl lysine isopeptide (Lys-Gly) (interchain with G-Cter in ubiquitin) cross-link involves residue K119.

This sequence belongs to the histone H2B family. As to quaternary structure, the nucleosome is a histone octamer containing two molecules each of H2A, H2B, H3 and H4 assembled in one H3-H4 heterotetramer and two H2A-H2B heterodimers. The octamer wraps approximately 147 bp of DNA. In terms of processing, monoubiquitination of Lys-119 gives a specific tag for epigenetic transcriptional activation and is also prerequisite for histone H3 'Lys-4' and 'Lys-79' methylation. GlcNAcylation at Ser-111 promotes monoubiquitination of Lys-119. It fluctuates in response to extracellular glucose, and associates with transcribed genes.

The protein resides in the nucleus. Its subcellular location is the chromosome. In terms of biological role, core component of nucleosome. Nucleosomes wrap and compact DNA into chromatin, limiting DNA accessibility to the cellular machineries which require DNA as a template. Histones thereby play a central role in transcription regulation, DNA repair, DNA replication and chromosomal stability. DNA accessibility is regulated via a complex set of post-translational modifications of histones, also called histone code, and nucleosome remodeling. The sequence is that of Late histone H2B.2.2 from Psammechinus miliaris (Green sea urchin).